Reading from the N-terminus, the 445-residue chain is Phosphoglucosamine mutase (445 aa).

Ser-102 (phosphoserine intermediate) is an active-site residue. Positions 102, 241, 243, and 245 each coordinate Mg(2+). Ser-102 is modified (phosphoserine).

It belongs to the phosphohexose mutase family. The cofactor is Mg(2+). Activated by phosphorylation.

It catalyses the reaction alpha-D-glucosamine 1-phosphate = D-glucosamine 6-phosphate. Catalyzes the conversion of glucosamine-6-phosphate to glucosamine-1-phosphate. The polypeptide is Phosphoglucosamine mutase (Escherichia coli O81 (strain ED1a)).